Here is a 382-residue protein sequence, read N- to C-terminus: Alkane 1-monooxygenase 2 (382 aa).

Transmembrane regions (helical) follow at residues 17 to 37 (GYLA…FVGV), 45 to 65 (WAWF…YLVG), 88 to 108 (VSAI…GHIF), and 114 to 134 (GLLG…IIAI). Fe cation is bound by residues H138, H142, H168, H172, and H173. A helical membrane pass occupies residues 236-256 (ALFAATFGLLWGWQGVVFFLG). Fe cation is bound by residues H312, H315, and H316.

Belongs to the fatty acid desaturase type 1 family. AlkB subfamily. Fe(3+) is required as a cofactor.

It is found in the cell inner membrane. The enzyme catalyses octane + 2 reduced [rubredoxin] + O2 + 2 H(+) = 2 oxidized [rubredoxin] + octan-1-ol + H2O. Its pathway is hydrocarbon metabolism; alkane degradation. Catalyzes the hydroxylation of n-alkanes in the presence of a NADH-rubredoxin reductase and rubredoxin. It preferably hydroxylases C8-C16 hydrocarbons. The polypeptide is Alkane 1-monooxygenase 2 (alkB2) (Alcanivorax borkumensis (strain ATCC 700651 / DSM 11573 / NCIMB 13689 / SK2)).